Consider the following 371-residue polypeptide: UDP-N-acetylglucosamine--N-acetylmuramyl-(pentapeptide) pyrophosphoryl-undecaprenol N-acetylglucosamine transferase (371 aa).

UDP-N-acetyl-alpha-D-glucosamine contacts are provided by residues 10–12 (TGG), Asn-122, Arg-166, Ser-196, and Gln-301.

Belongs to the glycosyltransferase 28 family. MurG subfamily.

Its subcellular location is the cell inner membrane. The enzyme catalyses di-trans,octa-cis-undecaprenyl diphospho-N-acetyl-alpha-D-muramoyl-L-alanyl-D-glutamyl-meso-2,6-diaminopimeloyl-D-alanyl-D-alanine + UDP-N-acetyl-alpha-D-glucosamine = di-trans,octa-cis-undecaprenyl diphospho-[N-acetyl-alpha-D-glucosaminyl-(1-&gt;4)]-N-acetyl-alpha-D-muramoyl-L-alanyl-D-glutamyl-meso-2,6-diaminopimeloyl-D-alanyl-D-alanine + UDP + H(+). The protein operates within cell wall biogenesis; peptidoglycan biosynthesis. In terms of biological role, cell wall formation. Catalyzes the transfer of a GlcNAc subunit on undecaprenyl-pyrophosphoryl-MurNAc-pentapeptide (lipid intermediate I) to form undecaprenyl-pyrophosphoryl-MurNAc-(pentapeptide)GlcNAc (lipid intermediate II). The polypeptide is UDP-N-acetylglucosamine--N-acetylmuramyl-(pentapeptide) pyrophosphoryl-undecaprenol N-acetylglucosamine transferase (Halothermothrix orenii (strain H 168 / OCM 544 / DSM 9562)).